A 411-amino-acid polypeptide reads, in one-letter code: MSGFVAGEEAVKSALSAATWIGAASPKYSHLVLSRVFNIYSEYIYANGFKLTRENLIEDFGTRPEDVDPFMKIFGGPNGIATYLTALPGLLPILPHPRNIPIIVPLFCVFTVMTSLAVGLRLWSRQKVAGGIRSFDWLALAGFGLTIIYGAVSVYHSKVSGPYQAFYDRTWDQMKENYKVYLVLTIMYPFIMGLIKISLLLFYYRVATLNYVQWAVYATGSLTIANSIAAIITHCLAFMPIDFWNHFLQSPFKFNSRTPMLVFGAVYILTDVAILIIPMPMVFQLKLYPREKVIAVIAFSLGGVACVASGFRIWAIDEFQNYSGKNSSGLMIDAWTMIELNLTLICASAPAIRALAIHYAPKILSTLPSAFSSSGATRGSKSAGSSGKSKTPESEKSMQVSQSPVIPKEVV.

Residues 1-99 (MSGFVAGEEA…LLPILPHPRN (99 aa)) are Extracellular-facing. The chain crosses the membrane as a helical span at residues 100-120 (IPIIVPLFCVFTVMTSLAVGL). The Cytoplasmic portion of the chain corresponds to 121 to 134 (RLWSRQKVAGGIRS). A helical membrane pass occupies residues 135–155 (FDWLALAGFGLTIIYGAVSVY). Residues 156–181 (HSKVSGPYQAFYDRTWDQMKENYKVY) lie on the Extracellular side of the membrane. The helical transmembrane segment at 182–202 (LVLTIMYPFIMGLIKISLLLF) threads the bilayer. Residues 203–227 (YYRVATLNYVQWAVYATGSLTIANS) are Cytoplasmic-facing. A helical transmembrane segment spans residues 228–248 (IAAIITHCLAFMPIDFWNHFL). Residues 249–262 (QSPFKFNSRTPMLV) are Extracellular-facing. Residues 263 to 283 (FGAVYILTDVAILIIPMPMVF) traverse the membrane as a helical segment. Topologically, residues 284–292 (QLKLYPREK) are cytoplasmic. Residues 293-313 (VIAVIAFSLGGVACVASGFRI) traverse the membrane as a helical segment. Over 314 to 328 (WAIDEFQNYSGKNSS) the chain is Extracellular. Residues Asn-321 and Asn-326 are each glycosylated (N-linked (GlcNAc...) asparagine). A helical transmembrane segment spans residues 329-349 (GLMIDAWTMIELNLTLICASA). At 350 to 411 (PAIRALAIHY…QSPVIPKEVV (62 aa)) the chain is on the cytoplasmic side. A disordered region spans residues 371–411 (FSSSGATRGSKSAGSSGKSKTPESEKSMQVSQSPVIPKEVV). Residues 372–389 (SSSGATRGSKSAGSSGKS) are compositionally biased toward low complexity.

This sequence belongs to the SAT4 family. As to quaternary structure, interacts with guanine nucleotide-binding protein alpha GPA2; to activate adenylate cyclase and positively regulate nematode trap formation.

The protein resides in the cell membrane. In terms of biological role, receptor that senses nematode-derived signals at the cell surface and signals via adenylate cyclase to positively regulate trap formation for nematode capture. In Arthrobotrys oligospora (strain ATCC 24927 / CBS 115.81 / DSM 1491) (Nematode-trapping fungus), this protein is Receptor GIN3.